A 789-amino-acid chain; its full sequence is Ribonucleoside-diphosphate reductase large subunit (789 aa).

Residues Thr-207, 222 to 223 (SC), Gly-253, 435 to 439 (NLCTE), and 620 to 624 (PTVSS) contribute to the substrate site. A disulfide bridge connects residues Cys-223 and Cys-452. Asn-435 serves as the catalytic Proton acceptor. Catalysis depends on Cys-437, which acts as the Cysteine radical intermediate. The active-site Proton acceptor is the Glu-439.

The protein belongs to the ribonucleoside diphosphate reductase large chain family. In terms of assembly, heterotetramer composed of a homodimer of the large subunit (R1) and a homodimer of the small subunit (R2). Larger multisubunit protein complex are also active, composed of (R1)n(R2)n.

It carries out the reaction a 2'-deoxyribonucleoside 5'-diphosphate + [thioredoxin]-disulfide + H2O = a ribonucleoside 5'-diphosphate + [thioredoxin]-dithiol. Functionally, ribonucleoside-diphosphate reductase holoenzyme provides the precursors necessary for viral DNA synthesis. Allows virus growth in non-dividing cells, as well as reactivation from latency in infected hosts. Catalyzes the biosynthesis of deoxyribonucleotides from the corresponding ribonucleotides. In Equus caballus (Horse), this protein is Ribonucleoside-diphosphate reductase large subunit.